The sequence spans 1056 residues: 120.7 kDa protein in NOF-FB transposable element (1056 aa).

The interval 716-749 (KTIKPTEGNDAEDNDTDDENKEMDLSEQPKEKPR) is disordered. Positions 724-736 (NDAEDNDTDDENK) are enriched in acidic residues. Residues 737–749 (EMDLSEQPKEKPR) are compositionally biased toward basic and acidic residues.

It localises to the nucleus. Functionally, may be involved in the transposition of NOF-FB and other FB elements. The sequence is that of 120.7 kDa protein in NOF-FB transposable element (NOF) from Drosophila melanogaster (Fruit fly).